The primary structure comprises 47 residues: Putative protein PinH (47 aa).

Residues Met-1–Val-47 form the Resolvase/invertase-type recombinase catalytic domain.

It belongs to the site-specific recombinase resolvase family.

The chain is Putative protein PinH (pinH) from Escherichia coli (strain K12).